We begin with the raw amino-acid sequence, 223 residues long: Ribonuclease 3 (223 aa).

One can recognise an RNase III domain in the interval 3–125 (LEKLQKKLGH…LIAAIYLDAG (123 aa)). Glutamate 38 serves as a coordination point for Mg(2+). Aspartate 42 is a catalytic residue. Mg(2+) contacts are provided by aspartate 111 and glutamate 114. Glutamate 114 is a catalytic residue. The region spanning 152 to 222 (DPKTRLQEFL…AQQAIEKLKI (71 aa)) is the DRBM domain.

Belongs to the ribonuclease III family. Homodimer. The cofactor is Mg(2+).

The protein resides in the cytoplasm. It carries out the reaction Endonucleolytic cleavage to 5'-phosphomonoester.. Its function is as follows. Digests double-stranded RNA. Involved in the processing of primary rRNA transcript to yield the immediate precursors to the large and small rRNAs (23S and 16S). Processes some mRNAs, and tRNAs when they are encoded in the rRNA operon. Processes pre-crRNA and tracrRNA of type II CRISPR loci if present in the organism. The chain is Ribonuclease 3 from Histophilus somni (strain 2336) (Haemophilus somnus).